Reading from the N-terminus, the 303-residue chain is Inosose dehydratase (303 aa).

Belongs to the IolE/MocC family. It depends on glutathione as a cofactor. Requires Co(2+) as cofactor. Mn(2+) serves as cofactor.

It catalyses the reaction scyllo-inosose = 3D-3,5/4-trihydroxycyclohexane-1,2-dione + H2O. Its pathway is polyol metabolism; myo-inositol degradation into acetyl-CoA; acetyl-CoA from myo-inositol: step 2/7. Functionally, catalyzes the dehydration of inosose (2-keto-myo-inositol, 2KMI or 2,4,6/3,5-pentahydroxycyclohexanone) to 3D-(3,5/4)-trihydroxycyclohexane-1,2-dione (D-2,3-diketo-4-deoxy-epi-inositol). The protein is Inosose dehydratase of Halalkalibacterium halodurans (strain ATCC BAA-125 / DSM 18197 / FERM 7344 / JCM 9153 / C-125) (Bacillus halodurans).